The sequence spans 385 residues: Exopolygalacturonase rpg15 (385 aa).

An N-terminal signal peptide occupies residues 1-26 (MVRFISFTSPIAALLLLSFGVKHAST). N-linked (GlcNAc...) asparagine glycans are attached at residues asparagine 143, asparagine 161, asparagine 164, and asparagine 180. PbH1 repeat units lie at residues 165–195 (STNL…DLYH), 196–217 (SSGI…AIKE), 219–241 (VEKV…GSLG), and 249–270 (VKHV…RVKT). Residue aspartate 210 is the Proton donor of the active site. The cysteines at positions 212 and 229 are disulfide-linked. N-linked (GlcNAc...) asparagine glycosylation occurs at asparagine 226. Histidine 233 is an active-site residue. 3 N-linked (GlcNAc...) asparagine glycosylation sites follow: asparagine 256, asparagine 319, and asparagine 343. The cysteines at positions 344 and 350 are disulfide-linked. The PbH1 5 repeat unit spans residues 350–376 (CSDITFSGIDITKASNTTDNVCVYLEG). Asparagine 365 carries an N-linked (GlcNAc...) asparagine glycan.

It belongs to the glycosyl hydrolase 28 family. N-glycosylated.

It localises to the secreted. It catalyses the reaction [(1-&gt;4)-alpha-D-galacturonosyl](n) + H2O = alpha-D-galacturonate + [(1-&gt;4)-alpha-D-galacturonosyl](n-1). Specific in hydrolyzing the terminal glycosidic bond of polygalacturonic acid and oligogalacturonates. This is Exopolygalacturonase rpg15 from Rhizopus delemar (strain RA 99-880 / ATCC MYA-4621 / FGSC 9543 / NRRL 43880) (Mucormycosis agent).